A 456-amino-acid polypeptide reads, in one-letter code: Protein shifted (456 aa).

A signal peptide spans 1–30 (MTHQGIGCLVKWLYLVLIVHTLLCIGQLEC). The tract at residues 34–112 (HHNRNNNNNN…GGGGSRHNRN (79 aa)) is disordered. Residues 44 to 55 (RRADSSSSEEGH) are compositionally biased toward basic and acidic residues. Asparagine 57 is a glycosylation site (N-linked (GlcNAc...) asparagine). Residues 77 to 87 (HQPRRGQRKKQ) show a composition bias toward basic residues. The segment covering 88-107 (QGGGGGGSGGGGGNGGGGGS) has biased composition (gly residues). The region spanning 119-261 (LWINEQQLKM…PIRLNFKKEC (143 aa)) is the WIF domain. N-linked (GlcNAc...) asparagine glycosylation is found at asparagine 173, asparagine 217, and asparagine 227. 16 cysteine pairs are disulfide-bonded: cysteine 224–cysteine 261, cysteine 283–cysteine 293, cysteine 287–cysteine 299, cysteine 301–cysteine 310, cysteine 315–cysteine 325, cysteine 319–cysteine 331, cysteine 333–cysteine 342, cysteine 347–cysteine 357, cysteine 351–cysteine 363, cysteine 365–cysteine 374, cysteine 379–cysteine 389, cysteine 383–cysteine 395, cysteine 397–cysteine 406, cysteine 416–cysteine 423, cysteine 418–cysteine 429, and cysteine 431–cysteine 440. EGF-like domains are found at residues 279–311 (TLQECSLKCGKNGYCNEHHICKCNVGYTGQYCE), 315–342 (CFPQCLNGGNCTAPSVCTCPEGYQGTQC), 343–375 (EGGICKDKCLNGGKCIQKDKCQCSKGYYGLRCE), 376–407 (YSKCVIPCKNEGRCIGNNLCRCPNGLRGDHCE), and 412–441 (QRSICKCRNGTCVSHKHCKCHPGFYGRHCN). N-linked (GlcNAc...) asparagine glycosylation is present at asparagine 324. Residue asparagine 420 is glycosylated (N-linked (GlcNAc...) asparagine).

Interacts with hh. In terms of tissue distribution, at the blastoderm stage, it is ubiquitously expressed. As embryogenesis continues, it is expressed in the epidermis and central nervous system, this expression being segmentally modulated. Also highly expressed at the foregut and hindgut throughout embryogenesis. In third instar wing imaginal disks, it is highly expressed in the most anterior and posterior parts of the disk and weakly expressed at the antero/posterior (A/P) compartment border. In the leg disks and the antenna part of the eye-antennal imaginal disk it is also weakly expressed at the A/P compartment border. Weakly expressed in the morphogenetic furrow in the eye primordium.

It is found in the secreted. The protein localises to the extracellular space. It localises to the extracellular matrix. In terms of biological role, required for normal accumulation and movement of lipid-modified hedgehog (hh) morphogen. May act by stabilizing the interaction between heparan sulfate proteoglycans (HSPGs) and hh, HSPGs being required for diffusion of hh morphogen. Not involved in wingless (wg) morphogen movement, suggesting that it may provide HSPG specificity for Hh. The polypeptide is Protein shifted (shf) (Drosophila melanogaster (Fruit fly)).